Here is a 699-residue protein sequence, read N- to C-terminus: Proline-rich receptor-like protein kinase PERK7 (699 aa).

Positions 1–167 (MAEGQSPENS…TSNSGSNSSS (167 aa)) are disordered. Topologically, residues 1–172 (MAEGQSPENS…SNSSSNDGLN (172 aa)) are extracellular. Pro residues-rich tracts occupy residues 9-23 (NSPP…PSPP) and 43-68 (SPPP…PPLP). Asn70 carries N-linked (GlcNAc...) asparagine glycosylation. Positions 100 to 121 (PPQQSDNNGNKGNNNENNKGND) are enriched in low complexity. N-linked (GlcNAc...) asparagine glycosylation is present at Asn131. Over residues 148–158 (HSQPRSLAPPT) the composition is skewed to polar residues. A glycan (N-linked (GlcNAc...) asparagine) is linked at Asn164. A helical membrane pass occupies residues 173-193 (IGAVIGLVAAAGILFIVMILL). At 194-699 (CVCCFRKKKK…SKTTTTNRGI (506 aa)) the chain is on the cytoplasmic side. Position 325 is a phosphothreonine (Thr325). One can recognise a Protein kinase domain in the interval 336-615 (FSKDRLLGQG…VRTLEGDASL (280 aa)). ATP is bound by residues 342 to 350 (LGQGGFGYV) and Lys364. At Tyr410 the chain carries Phosphotyrosine. Asp461 serves as the catalytic Proton acceptor. A phosphoserine mark is found at Ser465 and Ser494. Residues Thr495 and Thr500 each carry the phosphothreonine modification. Phosphotyrosine is present on Tyr508. Disordered regions lie at residues 609 to 639 (LEGD…DYEM) and 658 to 699 (DYGA…NRGI). The segment covering 687–699 (GSTSKTTTTNRGI) has biased composition (polar residues).

The protein belongs to the protein kinase superfamily. Ser/Thr protein kinase family. Mostly expressed in flower buds.

The protein resides in the cell membrane. The catalysed reaction is L-seryl-[protein] + ATP = O-phospho-L-seryl-[protein] + ADP + H(+). It catalyses the reaction L-threonyl-[protein] + ATP = O-phospho-L-threonyl-[protein] + ADP + H(+). This chain is Proline-rich receptor-like protein kinase PERK7 (PERK7), found in Arabidopsis thaliana (Mouse-ear cress).